Here is a 325-residue protein sequence, read N- to C-terminus: GMP reductase (325 aa).

Cys174 serves as the catalytic Thioimidate intermediate. Residue 203-226 participates in NADP(+) binding; that stretch reads IIADGGLRTHGDIAKSIRFGATMV.

It belongs to the IMPDH/GMPR family. GuaC type 2 subfamily.

It carries out the reaction IMP + NH4(+) + NADP(+) = GMP + NADPH + 2 H(+). Catalyzes the irreversible NADPH-dependent deamination of GMP to IMP. It functions in the conversion of nucleobase, nucleoside and nucleotide derivatives of G to A nucleotides, and in maintaining the intracellular balance of A and G nucleotides. The polypeptide is GMP reductase (Staphylococcus epidermidis (strain ATCC 35984 / DSM 28319 / BCRC 17069 / CCUG 31568 / BM 3577 / RP62A)).